Consider the following 613-residue polypeptide: DNA mismatch repair protein MutL (613 aa).

This sequence belongs to the DNA mismatch repair MutL/HexB family.

Its function is as follows. This protein is involved in the repair of mismatches in DNA. It is required for dam-dependent methyl-directed DNA mismatch repair. May act as a 'molecular matchmaker', a protein that promotes the formation of a stable complex between two or more DNA-binding proteins in an ATP-dependent manner without itself being part of a final effector complex. This chain is DNA mismatch repair protein MutL, found in Janthinobacterium sp. (strain Marseille) (Minibacterium massiliensis).